Here is a 134-residue protein sequence, read N- to C-terminus: Small ribosomal subunit protein uS8c (134 aa).

This sequence belongs to the universal ribosomal protein uS8 family. In terms of assembly, part of the 30S ribosomal subunit.

It is found in the plastid. Its subcellular location is the chloroplast. One of the primary rRNA binding proteins, it binds directly to 16S rRNA central domain where it helps coordinate assembly of the platform of the 30S subunit. This Capsella bursa-pastoris (Shepherd's purse) protein is Small ribosomal subunit protein uS8c (rps8).